Reading from the N-terminus, the 692-residue chain is Elongation factor G (692 aa).

The region spanning 8-282 (ENTRNIGIMA…AVLDYLPSPL (275 aa)) is the tr-type G domain. Residues 17-24 (AHIDAGKT), 81-85 (DTPGH), and 135-138 (NKMD) each bind GTP.

Belongs to the TRAFAC class translation factor GTPase superfamily. Classic translation factor GTPase family. EF-G/EF-2 subfamily.

The protein resides in the cytoplasm. Catalyzes the GTP-dependent ribosomal translocation step during translation elongation. During this step, the ribosome changes from the pre-translocational (PRE) to the post-translocational (POST) state as the newly formed A-site-bound peptidyl-tRNA and P-site-bound deacylated tRNA move to the P and E sites, respectively. Catalyzes the coordinated movement of the two tRNA molecules, the mRNA and conformational changes in the ribosome. The protein is Elongation factor G (fusA) of Halalkalibacterium halodurans (strain ATCC BAA-125 / DSM 18197 / FERM 7344 / JCM 9153 / C-125) (Bacillus halodurans).